The chain runs to 201 residues: Inosine triphosphate pyrophosphatase (201 aa).

An ITP-binding site is contributed by 16 to 21 (TGNAKK). Glu44 is a Mg(2+) binding site. Residues Lys56, 72 to 73 (DT), Lys89, 148 to 151 (FGWD), Lys171, and 176 to 177 (HR) each bind ITP.

This sequence belongs to the HAM1 NTPase family. Homodimer. Requires Mg(2+) as cofactor. Mn(2+) serves as cofactor.

It is found in the cytoplasm. It catalyses the reaction ITP + H2O = IMP + diphosphate + H(+). It carries out the reaction dITP + H2O = dIMP + diphosphate + H(+). The enzyme catalyses XTP + H2O = XMP + diphosphate + H(+). Functionally, pyrophosphatase that hydrolyzes non-canonical purine nucleotides such as inosine triphosphate (ITP), deoxyinosine triphosphate (dITP) or xanthosine 5'-triphosphate (XTP) to their respective monophosphate derivatives. The enzyme does not distinguish between the deoxy- and ribose forms. Probably excludes non-canonical purines from RNA and DNA precursor pools, thus preventing their incorporation into RNA and DNA and avoiding chromosomal lesions. This chain is Inosine triphosphate pyrophosphatase, found in Zea mays (Maize).